The sequence spans 1149 residues: DNA polymerase (1149 aa).

A compositionally biased stretch (polar residues) spans 1 to 28 (MSLVQSHGTSGLFTEPPNSINQQESSGP). Residues 1 to 49 (MSLVQSHGTSGLFTEPPNSINQQESSGPSLPAQDATQASASSARAGATP) are disordered. Positions 31 to 49 (PAQDATQASASSARAGATP) are enriched in low complexity.

Belongs to the DNA polymerase type-B family. As to quaternary structure, heterodimer with the terminal protein; this heterodimer binds to bp 9 to 18 of the genome. Forms a complex with viral pTP, DBP and hosts NFIA and POU2F1/OCT1 for initiation of replication.

Its subcellular location is the host nucleus. It carries out the reaction DNA(n) + a 2'-deoxyribonucleoside 5'-triphosphate = DNA(n+1) + diphosphate. Its function is as follows. Eukaryotic-type DNA polymerase involved in viral genomic replication. DNA synthesis is protein primed, and acts in a strand displacement replication. Assembles in complex with viral pTP, DBP, host NFIA and host POU2F1/OCT1 on viral origin of replication. The polymerase covalently transfers dCMP onto pTP, thereby initiating complementary strand synthesis. This is DNA polymerase from Canine adenovirus serotype 1 (strain CLL) (CAdV-1).